A 366-amino-acid chain; its full sequence is Spermidine/putrescine import ATP-binding protein PotA (366 aa).

An ABC transporter domain is found at 8–239; the sequence is IRFENVTKQF…PINKFVADFI (232 aa). Position 41–48 (41–48) interacts with ATP; the sequence is GPSGCGKT.

Belongs to the ABC transporter superfamily. Spermidine/putrescine importer (TC 3.A.1.11.1) family. In terms of assembly, the complex is composed of two ATP-binding proteins (PotA), two transmembrane proteins (PotB and PotC) and a solute-binding protein (PotD).

It is found in the cell membrane. It carries out the reaction ATP + H2O + polyamine-[polyamine-binding protein]Side 1 = ADP + phosphate + polyamineSide 2 + [polyamine-binding protein]Side 1.. In terms of biological role, part of the ABC transporter complex PotABCD involved in spermidine/putrescine import. Responsible for energy coupling to the transport system. The polypeptide is Spermidine/putrescine import ATP-binding protein PotA (Listeria innocua serovar 6a (strain ATCC BAA-680 / CLIP 11262)).